Reading from the N-terminus, the 23-residue chain is Ascaphin-1 (23 aa).

At Asn23 the chain carries Asparagine amide.

In terms of tissue distribution, expressed by the skin glands.

Its subcellular location is the secreted. Functionally, antimicrobial peptide that shows higher potency against Gram-negative bacteria than against Gram-positive bacteria. Has a very week hemolytic activity. The polypeptide is Ascaphin-1 (Ascaphus truei (Coastal tailed frog)).